The following is a 225-amino-acid chain: Ribonuclease 3 (225 aa).

The RNase III domain occupies 5–127; the sequence is IDKLERKLGY…IIGAIYLDSD (123 aa). Position 40 (Glu40) interacts with Mg(2+). The active site involves Asp44. Mg(2+) contacts are provided by Asp113 and Glu116. Glu116 is an active-site residue. Residues 154–224 enclose the DRBM domain; that stretch reads DPKTRLQEFL…AETALEQLTN (71 aa).

The protein belongs to the ribonuclease III family. Homodimer. Requires Mg(2+) as cofactor.

Its subcellular location is the cytoplasm. The enzyme catalyses Endonucleolytic cleavage to 5'-phosphomonoester.. Functionally, digests double-stranded RNA. Involved in the processing of primary rRNA transcript to yield the immediate precursors to the large and small rRNAs (23S and 16S). Processes some mRNAs, and tRNAs when they are encoded in the rRNA operon. Processes pre-crRNA and tracrRNA of type II CRISPR loci if present in the organism. In Vibrio campbellii (strain ATCC BAA-1116), this protein is Ribonuclease 3.